A 446-amino-acid polypeptide reads, in one-letter code: Signal recognition particle 54 kDa protein (446 aa).

Residues 104–111 (GLQGSGKT), 184–188 (DTAGR), and 242–245 (TKMD) each bind GTP.

It belongs to the GTP-binding SRP family. SRP54 subfamily. As to quaternary structure, part of the signal recognition particle protein translocation system, which is composed of SRP and FtsY. Archaeal SRP consists of a 7S RNA molecule of 300 nucleotides and two protein subunits: SRP54 and SRP19.

The protein resides in the cytoplasm. The enzyme catalyses GTP + H2O = GDP + phosphate + H(+). In terms of biological role, involved in targeting and insertion of nascent membrane proteins into the cytoplasmic membrane. Binds to the hydrophobic signal sequence of the ribosome-nascent chain (RNC) as it emerges from the ribosomes. The SRP-RNC complex is then targeted to the cytoplasmic membrane where it interacts with the SRP receptor FtsY. The polypeptide is Signal recognition particle 54 kDa protein (Methanocorpusculum labreanum (strain ATCC 43576 / DSM 4855 / Z)).